The sequence spans 243 residues: tRNA (guanine-N(1)-)-methyltransferase (243 aa).

Residues Gly-110 and 130 to 135 (VGDYVM) each bind S-adenosyl-L-methionine.

It belongs to the RNA methyltransferase TrmD family. As to quaternary structure, homodimer.

The protein localises to the cytoplasm. The catalysed reaction is guanosine(37) in tRNA + S-adenosyl-L-methionine = N(1)-methylguanosine(37) in tRNA + S-adenosyl-L-homocysteine + H(+). Its function is as follows. Specifically methylates guanosine-37 in various tRNAs. This Treponema denticola (strain ATCC 35405 / DSM 14222 / CIP 103919 / JCM 8153 / KCTC 15104) protein is tRNA (guanine-N(1)-)-methyltransferase.